The sequence spans 57 residues: Andropin (57 aa).

Positions 1–23 (MKYFVVLVVLALILAITVGPSDA) are cleaved as a signal peptide.

The protein belongs to the andropin family. In terms of tissue distribution, ejaculatory duct of adult males.

The protein resides in the secreted. Functionally, male-specific peptide with moderate activity against Gram-positive bacteria. In Drosophila mauritiana (Fruit fly), this protein is Andropin (Anp).